A 908-amino-acid polypeptide reads, in one-letter code: Transferrin-binding protein A (908 aa).

An N-terminal signal peptide occupies residues 1-24 (MQQQHLFRLNILCLSLMTALPVYA). A TonB box motif is present at residues 38–45 (DTIQVKAK). One can recognise a TBDR plug domain in the interval 51–176 (RDNEVTGLGK…LAGSVAFQTK (126 aa)). The TBDR beta-barrel domain maps to 187 to 908 (QWGIQSKTAY…NYTFSLEMKF (722 aa)). Positions 891–908 (NRYAAPGRNYTFSLEMKF) match the TonB C-terminal box motif.

Belongs to the TonB-dependent receptor family. Binds both human apo- and holo-transferrin (TF), via the TF C-terminus. Forms a large complex with TF and TbpB.

The protein resides in the cell outer membrane. In terms of biological role, neisseria acquires iron by extracting it from serum transferrin (TF) in its human host. Acts as a TF receptor and is required for TF utilization. Binds both apo- and holo-TF, via the TF C-terminus. The protein is Transferrin-binding protein A of Neisseria meningitidis serogroup B.